The chain runs to 139 residues: Large-conductance mechanosensitive channel (139 aa).

Helical transmembrane passes span 14-34 and 86-106; these read VVDM…VKSL and GLFI…FLLI.

The protein belongs to the MscL family. Homopentamer.

It localises to the cell inner membrane. Functionally, channel that opens in response to stretch forces in the membrane lipid bilayer. May participate in the regulation of osmotic pressure changes within the cell. The chain is Large-conductance mechanosensitive channel from Methylobacillus flagellatus (strain ATCC 51484 / DSM 6875 / VKM B-1610 / KT).